The chain runs to 812 residues: MDLENNTIHCSTFVQHTYIKLNPVGPIGAGRLPETRSVEEAQQYPTGWKFWLTILTMSALVVLGGLDTNIVATAVPSHASTRTPSPAASPLSPPATQRSSALTNRLTSVLSASYADSDIRDALETLSLRDIHNTPEVRRQLRLDVQKEVVDCNAEIVRDFGKVAEQLKRIGTVITSLNQTCDEMRKHISLARQDTAPVLEEASTLMNQKKEAETKQQLLDAFTKHFVVPDDDILVLTSLEDPINDQFFEVLARVKQVHRDCEALLGGENQRLGLELMDKSSRNLNSAYQKLYRWIQKEFKSLNLEDPRISSSIRRALRVLAERPSLFHSCLDFFAEARDYTLSDAFHYALTDAVSGTAGDSNVKPIEFSAHDPLRYIGDMLAWVHSTTVSEREALEALFVADGEELARGIQAGLSSEPWSRIDEHEEVAFDGQKALSDLVNRDLIGVSRALRQRVELVIQGHDDPVTCYKVVGLLSFYRTTFQKLLGPNSNLAELLVTLEKFTFGHFEALMKDVVSSLSTDHLALTPSEDLSTPQFLIDALEGLTSLMKTYEASFGADDTESTSDENRFTPVLRAAFDPFLELATSSAEELSNATARAIYLTNIHLTARTSVSEYSFVSTTHLNPISTKLSSLRIDLLEIQHRYLLDESGLQVLLTALEPFSPSSVAKSSTETEKQDSHPLESQPQQQPNLADIATLPAFQPEALIAVSQQLDDFLPSALMDATDNLKRLRSAAFVKSVTEEAVEAFCRDFEFVEGMIIGADEARGKVDVTRVDRGSETGAESEKGMEEGENGWGLRRLFPRTTGEIRVLLS.

Residues 77 to 96 show a composition bias toward low complexity; that stretch reads SHASTRTPSPAASPLSPPAT. 2 disordered regions span residues 77 to 100 and 665 to 688; these read SHAS…QRSS and SVAK…PQQQ. Over residues 671 to 680 the composition is skewed to basic and acidic residues; that stretch reads TETEKQDSHP.

This sequence belongs to the COG6 family.

The protein resides in the golgi apparatus membrane. In terms of biological role, acts as a component of the peripheral membrane COG complex that is involved in intra-Golgi protein trafficking. COG is located at the cis-Golgi, and regulates tethering of retrograde intra-Golgi vesicles and possibly a number of other membrane trafficking events. The chain is Conserved oligomeric Golgi complex subunit 6 (cog6) from Aspergillus oryzae (strain ATCC 42149 / RIB 40) (Yellow koji mold).